The following is a 425-amino-acid chain: UDP-N-acetylglucosamine 1-carboxyvinyltransferase (425 aa).

22–23 (KN) lines the phosphoenolpyruvate pocket. Arg98 contacts UDP-N-acetyl-alpha-D-glucosamine. Cys122 (proton donor) is an active-site residue. Cys122 bears the 2-(S-cysteinyl)pyruvic acid O-phosphothioketal mark. UDP-N-acetyl-alpha-D-glucosamine-binding positions include 127-131 (RPVDQ), Asp313, and Ile335.

The protein belongs to the EPSP synthase family. MurA subfamily.

It localises to the cytoplasm. It catalyses the reaction phosphoenolpyruvate + UDP-N-acetyl-alpha-D-glucosamine = UDP-N-acetyl-3-O-(1-carboxyvinyl)-alpha-D-glucosamine + phosphate. Its pathway is cell wall biogenesis; peptidoglycan biosynthesis. Its function is as follows. Cell wall formation. Adds enolpyruvyl to UDP-N-acetylglucosamine. This is UDP-N-acetylglucosamine 1-carboxyvinyltransferase from Xylella fastidiosa (strain M23).